Consider the following 317-residue polypeptide: UDP-3-O-acylglucosamine N-acyltransferase (317 aa).

H229 serves as the catalytic Proton acceptor.

It belongs to the transferase hexapeptide repeat family. LpxD subfamily. Homotrimer.

The catalysed reaction is a UDP-3-O-[(3R)-3-hydroxyacyl]-alpha-D-glucosamine + a (3R)-hydroxyacyl-[ACP] = a UDP-2-N,3-O-bis[(3R)-3-hydroxyacyl]-alpha-D-glucosamine + holo-[ACP] + H(+). Its pathway is bacterial outer membrane biogenesis; LPS lipid A biosynthesis. Catalyzes the N-acylation of UDP-3-O-acylglucosamine using 3-hydroxyacyl-ACP as the acyl donor. Is involved in the biosynthesis of lipid A, a phosphorylated glycolipid that anchors the lipopolysaccharide to the outer membrane of the cell. This chain is UDP-3-O-acylglucosamine N-acyltransferase, found in Campylobacter curvus (strain 525.92).